The primary structure comprises 282 residues: Anamorsin homolog (282 aa).

The segment at 1-140 (MADLQGKAVL…KPVYEVGAAA (140 aa)) is N-terminal SAM-like domain. A linker region spans residues 141–192 (PLKLSFAKKKQSGAAAPAAQVAEVWTIATDDFDDDDLLENDGDELLDAEDLA). [2Fe-2S] cluster-binding residues include cysteine 203, cysteine 214, cysteine 217, and cysteine 219. Residues 203–219 (CEVGAGGKRRACKNCTC) are fe-S binding site A. Residues cysteine 243, cysteine 246, cysteine 254, and cysteine 257 each contribute to the [4Fe-4S] cluster site. 2 short sequence motifs (cx2C motif) span residues 243-246 (CGNC) and 254-257 (CASC). The fe-S binding site B stretch occupies residues 243 to 257 (CGNCYLGDAFRCASC).

The protein belongs to the anamorsin family. Monomer. [2Fe-2S] cluster is required as a cofactor. The cofactor is [4Fe-4S] cluster.

The protein localises to the cytoplasm. It is found in the mitochondrion intermembrane space. Component of the cytosolic iron-sulfur (Fe-S) protein assembly (CIA) machinery. Required for the maturation of extramitochondrial Fe-S proteins. Part of an electron transfer chain functioning in an early step of cytosolic Fe-S biogenesis, facilitating the de novo assembly of a [4Fe-4S] cluster on the cytosolic Fe-S scaffold complex. Electrons are transferred from NADPH via a FAD- and FMN-containing diflavin oxidoreductase. Together with the diflavin oxidoreductase, also required for the assembly of the diferric tyrosyl radical cofactor of ribonucleotide reductase (RNR), probably by providing electrons for reduction during radical cofactor maturation in the catalytic small subunit. This Monosiga brevicollis (Choanoflagellate) protein is Anamorsin homolog.